A 173-amino-acid chain; its full sequence is NADH-ubiquinone oxidoreductase chain 6 (173 aa).

5 helical membrane passes run 1–21 (MTYF…AVAS), 27–47 (YGVV…VNLG), 48–68 (VSFV…VVFV), 87–107 (VMGY…LGGF), and 139–159 (YGVG…FVVL).

The protein belongs to the complex I subunit 6 family.

It is found in the mitochondrion membrane. The enzyme catalyses a ubiquinone + NADH + 5 H(+)(in) = a ubiquinol + NAD(+) + 4 H(+)(out). Functionally, core subunit of the mitochondrial membrane respiratory chain NADH dehydrogenase (Complex I) that is believed to belong to the minimal assembly required for catalysis. Complex I functions in the transfer of electrons from NADH to the respiratory chain. The immediate electron acceptor for the enzyme is believed to be ubiquinone. In Coturnix japonica (Japanese quail), this protein is NADH-ubiquinone oxidoreductase chain 6 (MT-ND6).